A 61-amino-acid chain; its full sequence is Large ribosomal subunit protein bL32 (61 aa).

Residues 1–16 (MPTPKKKTSRSKRDMR) are compositionally biased toward basic residues. The disordered stretch occupies residues 1-47 (MPTPKKKTSRSKRDMRRSHDGLTAPAIAVEKKTGELVRPHRAHKGAD). Residues 29-38 (VEKKTGELVR) are compositionally biased toward basic and acidic residues.

This sequence belongs to the bacterial ribosomal protein bL32 family.

The protein is Large ribosomal subunit protein bL32 of Bdellovibrio bacteriovorus (strain ATCC 15356 / DSM 50701 / NCIMB 9529 / HD100).